The primary structure comprises 275 residues: Caspase-3 (275 aa).

M1 is subject to N-acetylmethionine. 2 propeptides span residues 1–9 and 10–28; these read MENTENSVD and SKSIKTSETKILHGSKSMD. The residue at position 11 (K11) is an N6-acetyllysine. At S26 the chain carries Phosphoserine. Residues H121 and C163 contribute to the active site. C163 carries the post-translational modification S-nitrosocysteine; in inhibited form.

This sequence belongs to the peptidase C14A family. In terms of assembly, heterotetramer that consists of two anti-parallel arranged heterodimers, each one formed by a 17 kDa (p17) and a 12 kDa (p12) subunit. Interacts with BIRC6/bruce. Post-translationally, cleavage by granzyme B, caspase-6, caspase-8 and caspase-10 generates the two active subunits. Additional processing of the propeptides is likely due to the autocatalytic activity of the activated protease. Active heterodimers between the small subunit of caspase-7 protease and the large subunit of caspase-3 also occur and vice versa. S-nitrosylated on its catalytic site cysteine in unstimulated cell lines and denitrosylated upon activation of the Fas apoptotic pathway, associated with an increase in intracellular caspase activity. Fas therefore activates caspase-3 not only by inducing the cleavage of the caspase zymogen to its active subunits, but also by stimulating the denitrosylation of its active site thiol. In terms of processing, ubiquitinated by BIRC6; this activity is inhibited by DIABLO/SMAC.

The protein resides in the cytoplasm. The catalysed reaction is Strict requirement for an Asp residue at positions P1 and P4. It has a preferred cleavage sequence of Asp-Xaa-Xaa-Asp-|- with a hydrophobic amino-acid residue at P2 and a hydrophilic amino-acid residue at P3, although Val or Ala are also accepted at this position.. Its activity is regulated as follows. Inhibited by BIRC6; following inhibition of BIRC6-caspase binding by DIABLO/SMAC, BIRC6 is subjected to caspase cleavage, leading to an increase in active caspases. Functionally, involved in the activation cascade of caspases responsible for apoptosis execution. At the onset of apoptosis, it proteolytically cleaves poly(ADP-ribose) polymerase PARP1 at a '216-Asp-|-Gly-217' bond. Cleaves and activates sterol regulatory element binding proteins (SREBPs) between the basic helix-loop-helix leucine zipper domain and the membrane attachment domain. Cleaves and activates caspase-6, -7 and -9 (CASP6, CASP7 and CASP9, respectively). Cleaves and inactivates interleukin-18 (IL18). Triggers cell adhesion in sympathetic neurons through RET cleavage. Cleaves IL-1 beta between an Asp and an Ala, releasing the mature cytokine which is involved in a variety of inflammatory processes. Cleaves and inhibits serine/threonine-protein kinase AKT1 in response to oxidative stress. Acts as an inhibitor of type I interferon production during virus-induced apoptosis by mediating cleavage of antiviral proteins CGAS, IRF3 and MAVS, thereby preventing cytokine overproduction. Also involved in pyroptosis by mediating cleavage and activation of gasdermin-E (GSDME). Cleaves XRCC4 and phospholipid scramblase proteins XKR4, XKR8 and XKR9, leading to promote phosphatidylserine exposure on apoptotic cell surface. Cleaves BIRC6 following inhibition of BIRC6-caspase binding by DIABLO/SMAC. This is Caspase-3 (CASP3) from Bos taurus (Bovine).